The primary structure comprises 439 residues: Telomeric repeat-binding factor 1 (439 aa).

Residues 1-36 are disordered; sequence MAEDVSSAAPSPRGCADGRDADPTEEQMAETERNDE. Alanine 2 is modified (N-acetylalanine). Residue serine 11 is modified to Phosphoserine. Acidic residues predominate over residues 23 to 36; sequence PTEEQMAETERNDE. A TRFH mediates dimerization region spans residues 58–268; it reads EEEEEDAGLV…AAAKVVESKR (211 aa). Residue lysine 213 forms a Glycyl lysine isopeptide (Lys-Gly) (interchain with G-Cter in SUMO2) linkage. At serine 219 the chain carries Phosphoserine; by ATM. Residues 265–378 are interaction with RLIM; it reads ESKRTRTITS…PVTPEKHRAR (114 aa). The segment at 266-311 is disordered; it reads SKRTRTITSQDKPSGNDVEMETEANLDTRKSVSDKQSAVTESSEGT. The segment covering 299 to 311 has biased composition (polar residues); sequence DKQSAVTESSEGT. A Glycyl lysine isopeptide (Lys-Gly) (interchain with G-Cter in SUMO2) cross-link involves residue lysine 325. Residues 326 to 375 form a disordered region; sequence LQHGTQQQDLNKKERRVGTPQSTKKKKESRRATESRIPVSKSQPVTPEKH. A Nuclear localization signal motif is present at residues 337–356; sequence KKERRVGTPQSTKKKKESRR. Residue lysine 366 forms a Glycyl lysine isopeptide (Lys-Gly) (interchain with G-Cter in SUMO2) linkage. An HTH myb-type domain is found at 375–432; the sequence is HRARKRQAWLWEEDKNLRSGVRKYGEGNWSKILLHYKFNNRTSVMLKDRWRTMKKLKL. The segment at residues 403–428 is a DNA-binding region (H-T-H motif); the sequence is WSKILLHYKFNNRTSVMLKDRWRTMK.

In terms of assembly, homodimer; can contain both isoforms. Found in a complex with POT1; TINF2 and TNKS1. Interacts with ATM, TINF2, TNKS1, TNKS2, PINX1, NEK2 and MAPRE1. Component of the shelterin complex (telosome) composed of TERF1, TERF2, TINF2, TERF2IP ACD and POT1. Interacts with RLIM (via N-terminus). Interacts with FBXO4. Interaction with TINF2 protects against interaction with FBXO4 and subsequent polyubiquitination and proteasomal degradation. Interacts with GNL3L; this interaction promotes homodimerization. Interacts with TIN2. Interacts with RTEL1. Interactions with GNL3L and TIN2 are mutually exclusive. Interacts with CCDC79/TERB1. Interacts with TRIOBP isoform 1; mediates TERF1 localization to the centrosome. Phosphorylated preferentially on Ser-219 in an ATM-dependent manner in response to ionizing DNA damage. Post-translationally, ADP-ribosylation by TNKS1 or TNKS2 diminishes its ability to bind to telomeric DNA. In terms of processing, ubiquitinated by RLIM/RNF12, leading to its degradation by the proteasome. Ubiquitinated by a SCF (SKP1-CUL1-F-box protein) ubiquitin-protein ligase complex, leading to its degradation by the proteasome. In terms of tissue distribution, highly expressed and ubiquitous. Isoform Pin2 predominates.

The protein localises to the nucleus. It is found in the cytoplasm. It localises to the cytoskeleton. The protein resides in the spindle. Its subcellular location is the chromosome. The protein localises to the telomere. Its function is as follows. Binds the telomeric double-stranded 5'-TTAGGG-3' repeat and negatively regulates telomere length. Involved in the regulation of the mitotic spindle. Component of the shelterin complex (telosome) that is involved in the regulation of telomere length and protection. Shelterin associates with arrays of double-stranded 5'-TTAGGG-3' repeats added by telomerase and protects chromosome ends; without its protective activity, telomeres are no longer hidden from the DNA damage surveillance and chromosome ends are inappropriately processed by DNA repair pathways. This chain is Telomeric repeat-binding factor 1 (TERF1), found in Homo sapiens (Human).